The primary structure comprises 165 residues: AIG2-like protein A (165 aa).

15–20 (YGSFQD) is a binding site for substrate. Catalysis depends on E83, which acts as the Proton acceptor.

The protein belongs to the gamma-glutamylcyclotransferase family. In terms of tissue distribution, expressed only in seeds.

Its function is as follows. Putative gamma-glutamylcyclotransferase. The sequence is that of AIG2-like protein A from Arabidopsis thaliana (Mouse-ear cress).